The following is a 272-amino-acid chain: WIMGHMVNDLDLVDEYLDDGANSLELDVEFSKSGTALRTYHGVPCDCFRSCTRSEKFSKYLDYIRQLTTPGNSKFRSRLILLVLDLKLNPLSSSAAYNAGADVARNLLDNYWQRGESKARAYIVLSLETIAGAEFITGFKDIMKKEGFDEKYYDKIGWDFSGNEDLGKIRDVLESHGIREHIWQGDGITNCLPRDDNRLKQAISRRYSPTYVYADKVYTWSIDKESSIENALRLGVDGVMTNYPARVISVLGEREFSGKLRLATYDDNPWEK.

Residue His5 is part of the active site. Residues Glu25 and Asp27 each coordinate Mg(2+). The active-site Nucleophile is the His41. 2 disulfides stabilise this stretch: Cys45-Cys51 and Cys47-Cys191. Asp85 contributes to the Mg(2+) binding site.

The protein belongs to the arthropod phospholipase D family. Class II subfamily. Class IIb sub-subfamily. Mg(2+) is required as a cofactor. Expressed by the venom gland.

The protein resides in the secreted. It carries out the reaction an N-(acyl)-sphingosylphosphocholine = an N-(acyl)-sphingosyl-1,3-cyclic phosphate + choline. The catalysed reaction is N-hexanoyl-sphing-4-enine-1-phosphocholine = N-(hexanoyl)-sphing-4-enine-1,3-cyclic phosphate + choline. The enzyme catalyses an N-(acyl)-sphingosylphosphoethanolamine = an N-(acyl)-sphingosyl-1,3-cyclic phosphate + ethanolamine. It catalyses the reaction N-dodecanoyl-heptadecasphing-4-enine-1-phosphoethanolamine = N-dodecanoyl-heptadecasphing-4-enine-1,3-cyclic phosphate + ethanolamine. It carries out the reaction a 1-acyl-sn-glycero-3-phosphoethanolamine = a 1-acyl-sn-glycero-2,3-cyclic phosphate + ethanolamine. The catalysed reaction is 1-tetradecanoyl-sn-glycero-3-phosphoethanolamine = 1-tetradecanoyl-sn-glycero-2,3-cyclic phosphate + ethanolamine. Dermonecrotic toxins cleave the phosphodiester linkage between the phosphate and headgroup of certain phospholipids (sphingolipid and lysolipid substrates), forming an alcohol (often choline) and a cyclic phosphate. This toxin acts on lysophosphatidylethanolamine (LPE) and ceramide phosphoethanolamine (CPE) with high activity. This toxin acts on sphingomyelin (SM) with very low activity and is not active on lysophosphatidylserine (LPS), lysophosphatidylcholine (LPC) and lysophosphatidylglycerol (LPG). It acts by transphosphatidylation, releasing exclusively cyclic phosphate as second products. It is not surprising that spider toxins have affinity for ethanolamine-containing sphingolipids since they are common in insect prey. Induces dermonecrosis, hemolysis, increased vascular permeability, edema, inflammatory response, and platelet aggregation. The sequence is that of Dermonecrotic toxin StSicTox-betaIC1 from Sicarius terrosus (Cave spider).